A 468-amino-acid chain; its full sequence is Aldehyde dehydrogenase family 3 member B1 (468 aa).

Met1 bears the N-acetylmethionine mark. Residue 188 to 193 (GNTYVG) participates in NAD(+) binding. Catalysis depends on residues Glu210 and Cys244. Residues Cys462 and Cys463 are each lipidated (S-palmitoyl cysteine). The residue at position 465 (Cys465) is a Cysteine methyl ester. Residue Cys465 is the site of S-geranylgeranyl cysteine attachment. The propeptide at 466–468 (TLL) is removed in mature form.

This sequence belongs to the aldehyde dehydrogenase family. In terms of processing, dually lipidated in the C-terminus; prenylation occurs prior to, and is a prerequisite for palmitoylation. It is also required for activity towards long-chain substrates.

It is found in the cell membrane. The catalysed reaction is an aldehyde + NAD(+) + H2O = a carboxylate + NADH + 2 H(+). It carries out the reaction a long-chain fatty aldehyde + NAD(+) + H2O = a long-chain fatty acid + NADH + 2 H(+). It catalyses the reaction a medium-chain fatty aldehyde + NAD(+) + H2O = a medium-chain fatty acid + NADH + 2 H(+). The enzyme catalyses octanal + NAD(+) + H2O = octanoate + NADH + 2 H(+). The catalysed reaction is nonanal + NAD(+) + H2O = nonanoate + NADH + 2 H(+). It carries out the reaction hexadecanoate + NADH + 2 H(+) = hexadecanal + NAD(+) + H2O. It catalyses the reaction (2E)-octenal + NAD(+) + H2O = (2E)-octenoate + NADH + 2 H(+). The enzyme catalyses (E)-non-2-enal + NAD(+) + H2O = (E)-non-2-enoate + NADH + 2 H(+). The catalysed reaction is (E)-4-hydroxynon-2-enal + NAD(+) + H2O = (E)-4-hydroxynon-2-enoate + NADH + 2 H(+). It carries out the reaction (2E)-hexadecenal + NAD(+) + H2O = (E)-hexadec-2-enoate + NADH + 2 H(+). It catalyses the reaction benzaldehyde + NAD(+) + H2O = benzoate + NADH + 2 H(+). The enzyme catalyses an aldehyde + NADP(+) + H2O = a carboxylate + NADPH + 2 H(+). The catalysed reaction is a medium-chain fatty aldehyde + NADP(+) + H2O = a medium-chain fatty acid + NADPH + 2 H(+). It carries out the reaction hexanal + NADP(+) + H2O = hexanoate + NADPH + 2 H(+). It catalyses the reaction octanal + NADP(+) + H2O = octanoate + NADPH + 2 H(+). The enzyme catalyses nonanal + NADP(+) + H2O = nonanoate + NADPH + 2 H(+). The catalysed reaction is (2E)-octenal + NADP(+) + H2O = (2E)-octenoate + NADPH + 2 H(+). It carries out the reaction (E)-non-2-enal + NADP(+) + H2O = (E)-non-2-enoate + NADPH + 2 H(+). It catalyses the reaction (E)-4-hydroxynon-2-enal + NADP(+) + H2O = (E)-4-hydroxynon-2-enoate + NADPH + 2 H(+). The enzyme catalyses benzaldehyde + NADP(+) + H2O = benzoate + NADPH + 2 H(+). It participates in alcohol metabolism; ethanol degradation; acetate from ethanol: step 2/2. Oxidizes medium and long chain saturated and unsaturated fatty aldehydes generated in the plasma membrane into non-toxic fatty acids. May have a protective role against the cytotoxicity induced by lipid peroxidation. Short-chain fatty aldehydes are not good substrates. Can use both NADP(+) and NAD(+) as electron acceptor in vitro, however in vivo preference will depend on their tissue levels. Low activity towards acetaldehyde and 3,4-dihydroxyphenylacetaldehyde. Able to metabolize aromatic aldehydes such as benzaldehyde to their acid form. The polypeptide is Aldehyde dehydrogenase family 3 member B1 (Aldh3b1) (Rattus norvegicus (Rat)).